The chain runs to 663 residues: Translation factor GUF1, mitochondrial (663 aa).

The N-terminal 37 residues, 1 to 37 (MRGCLQSVRLLTTALGQSPRRPLPFAFRLPPNASRLF), are a transit peptide targeting the mitochondrion. Positions 65-245 (ERYRNFCIVA…TIVEQIPAPI (181 aa)) constitute a tr-type G domain. Residues 74 to 81 (AHVDHGKS), 138 to 142 (DTPGH), and 192 to 195 (NKVD) each bind GTP.

It belongs to the TRAFAC class translation factor GTPase superfamily. Classic translation factor GTPase family. LepA subfamily.

It localises to the mitochondrion inner membrane. The catalysed reaction is GTP + H2O = GDP + phosphate + H(+). Promotes mitochondrial protein synthesis. May act as a fidelity factor of the translation reaction, by catalyzing a one-codon backward translocation of tRNAs on improperly translocated ribosomes. Binds to mitochondrial ribosomes in a GTP-dependent manner. The chain is Translation factor GUF1, mitochondrial from Uncinocarpus reesii (strain UAMH 1704).